Consider the following 603-residue polypeptide: Sesquiterpene synthase Cad (603 aa).

The span at Met1–Ser13 shows a compositional bias: polar residues. A disordered region spans residues Met1–Gln23. 4 residues coordinate Mg(2+): Asp357, Asp361, Asp498, and Glu506. The short motif at Asp357–Asp361 is the DDXXD motif element.

Belongs to the terpene synthase family. Tpsa subfamily. Requires Mg(2+) as cofactor. Mn(2+) serves as cofactor. As to expression, mostly expressed in leaves and, to a lower extent, in stems and xylem.

The enzyme catalyses (2E,6E)-farnesyl diphosphate = beta-cadinene + diphosphate. The protein operates within secondary metabolite biosynthesis; terpenoid biosynthesis. Functionally, sesquiterpene synthase involved in the biosynthesis of volatile compounds. Mediates the conversion of (2E,6E)-farnesyl diphosphate (FPP) into beta-cadinene. Not active with geranyl diphosphate (GPP) and geranylgeranyl diphosphate (GGPP) as substrates. In Chamaecyparis formosensis (Formosan cypress), this protein is Sesquiterpene synthase Cad.